The following is a 228-amino-acid chain: Putative N-acetylmannosamine-6-phosphate 2-epimerase (228 aa).

The protein belongs to the NanE family.

It catalyses the reaction an N-acyl-D-glucosamine 6-phosphate = an N-acyl-D-mannosamine 6-phosphate. Its pathway is amino-sugar metabolism; N-acetylneuraminate degradation; D-fructose 6-phosphate from N-acetylneuraminate: step 3/5. Functionally, converts N-acetylmannosamine-6-phosphate (ManNAc-6-P) to N-acetylglucosamine-6-phosphate (GlcNAc-6-P). The sequence is that of Putative N-acetylmannosamine-6-phosphate 2-epimerase from Lactiplantibacillus plantarum (strain ATCC BAA-793 / NCIMB 8826 / WCFS1) (Lactobacillus plantarum).